The following is a 567-amino-acid chain: Nucleolus and neural progenitor protein (567 aa).

Phosphoserine is present on Ser265. Positions 437-457 are disordered; it reads SKHHLRQRRSQNKFLRRQRKP. Positions 442–460 are nuclear localization signal; that stretch reads RQRRSQNKFLRRQRKPQRK.

This sequence belongs to the nepro family.

It localises to the nucleus. The protein localises to the nucleolus. Its function is as follows. May play a role in cortex development as part of the Notch signaling pathway. Downstream of Notch may repress the expression of proneural genes and inhibit neuronal differentiation thereby maintaining neural progenitors. May also play a role in preimplentation embryo development. This is Nucleolus and neural progenitor protein from Homo sapiens (Human).